A 66-amino-acid chain; its full sequence is Large ribosomal subunit protein bL35 (66 aa).

Over residues Met1–Lys46 the composition is skewed to basic residues. Residues Met1–Val50 are disordered.

It belongs to the bacterial ribosomal protein bL35 family.

The polypeptide is Large ribosomal subunit protein bL35 (Lactobacillus delbrueckii subsp. bulgaricus (strain ATCC 11842 / DSM 20081 / BCRC 10696 / JCM 1002 / NBRC 13953 / NCIMB 11778 / NCTC 12712 / WDCM 00102 / Lb 14)).